We begin with the raw amino-acid sequence, 558 residues long: 2-isopropylmalate synthase (558 aa).

A Pyruvate carboxyltransferase domain is found at 30–303 (PIWCSVDLRD…DPGIDCSDIN (274 aa)). Positions 39, 242, 244, and 278 each coordinate Mg(2+). The tract at residues 437–558 (QPGARLKFLD…ANRIVGRKAR (122 aa)) is regulatory domain.

The protein belongs to the alpha-IPM synthase/homocitrate synthase family. LeuA type 2 subfamily. Homodimer. Mg(2+) serves as cofactor.

Its subcellular location is the cytoplasm. The catalysed reaction is 3-methyl-2-oxobutanoate + acetyl-CoA + H2O = (2S)-2-isopropylmalate + CoA + H(+). It functions in the pathway amino-acid biosynthesis; L-leucine biosynthesis; L-leucine from 3-methyl-2-oxobutanoate: step 1/4. Its function is as follows. Catalyzes the condensation of the acetyl group of acetyl-CoA with 3-methyl-2-oxobutanoate (2-ketoisovalerate) to form 3-carboxy-3-hydroxy-4-methylpentanoate (2-isopropylmalate). The chain is 2-isopropylmalate synthase from Mesorhizobium japonicum (strain LMG 29417 / CECT 9101 / MAFF 303099) (Mesorhizobium loti (strain MAFF 303099)).